Here is a 754-residue protein sequence, read N- to C-terminus: ToMV resistance protein Tm-1(GCR237) (754 aa).

The segment at 1-201 is N-terminal inhibitory domain NN; sequence MATAQSNSPR…AGMVIGRLES (201 aa). ATP contacts are provided by residues 18 to 20, Thr-55, Arg-92, and 124 to 127; these read DTK and GSGG. The N-terminal inhibitory domain NC stretch occupies residues 211–431; sequence KFTVGVTMFG…VDSFLEISPK (221 aa).

The protein belongs to the UPF0261 family. As to quaternary structure, homodimer. (Microbial infection) Binds, via an ATP bridge, to the tobamoviruses avirulent (Avr) replication proteins (large and small subunits, e.g. tomato mosaic virus (ToMV/TMV) AC P03587, tobacco mild green mosaic virus (TMGMV) AC P18339 and pepper mild mottle virus (PMMoV) AC P89657) to inhibit their function after the translation of tobamoviruses RNA, but before the viral replication complex formation on the membrane surfaces; this interaction is not possible with resistance-breaking strains replication proteins.

Inhibitor of viral RNA replication which confers resistance to some tobamoviruses including tomato mosaic virus (ToMV) (e.g. isolate L), tobacco mosaic virus (TMV), tobacco mild green mosaic virus (TMGMV) and pepper mild mottle virus (PMMoV), but not to resistance-breaking isolates of ToMV (e.g. LT1, SL-1 and ToMV1-2) and tomato brown rugose fruit virus (ToBRFV). Prevents tobamoviruses RNA replication by affecting the association of tobamoviruses replication proteins (large and small subunits) with host membrane-associated proteins (e.g. TOM1, TOM2A and ARL8), thus inhibiting the replication complex formation on the membranes and avoiding viral negative-strand RNA synthesis. Inhibits triphosphatase activity of ToMV replication proteins. The polypeptide is ToMV resistance protein Tm-1(GCR237) (Solanum lycopersicum (Tomato)).